The sequence spans 257 residues: Transmembrane protein C257L (257 aa).

2 helical membrane passes run 123 to 143 and 163 to 183; these read LELLGYSPTPLIGGDLMFTAL and IMIFFLIILLCVILGIFYVLV.

This sequence belongs to the asfivirus C257R family.

The protein localises to the host membrane. The protein resides in the virion. The protein is Transmembrane protein C257L of African swine fever virus (isolate Pig/Kenya/KEN-50/1950) (ASFV).